The chain runs to 556 residues: 2-succinyl-5-enolpyruvyl-6-hydroxy-3-cyclohexene-1-carboxylate synthase (556 aa).

It belongs to the TPP enzyme family. MenD subfamily. Homodimer. Mg(2+) serves as cofactor. It depends on Mn(2+) as a cofactor. Requires thiamine diphosphate as cofactor.

The enzyme catalyses isochorismate + 2-oxoglutarate + H(+) = 5-enolpyruvoyl-6-hydroxy-2-succinyl-cyclohex-3-ene-1-carboxylate + CO2. Its pathway is quinol/quinone metabolism; 1,4-dihydroxy-2-naphthoate biosynthesis; 1,4-dihydroxy-2-naphthoate from chorismate: step 2/7. The protein operates within quinol/quinone metabolism; menaquinone biosynthesis. In terms of biological role, catalyzes the thiamine diphosphate-dependent decarboxylation of 2-oxoglutarate and the subsequent addition of the resulting succinic semialdehyde-thiamine pyrophosphate anion to isochorismate to yield 2-succinyl-5-enolpyruvyl-6-hydroxy-3-cyclohexene-1-carboxylate (SEPHCHC). In Staphylococcus epidermidis (strain ATCC 12228 / FDA PCI 1200), this protein is 2-succinyl-5-enolpyruvyl-6-hydroxy-3-cyclohexene-1-carboxylate synthase.